Here is a 234-residue protein sequence, read N- to C-terminus: Probable RNA/DNA demethylase ALKBH6 (234 aa).

The Fe2OG dioxygenase domain occupies 96–222 (TANHVLVNEY…RVSLTIRHVP (127 aa)). The 2-oxoglutarate site is built by Asn103 and Tyr105. Fe cation contacts are provided by His114, Asp116, and His180. Positions 213 and 215 each coordinate 2-oxoglutarate.

The protein belongs to the alkB family. Requires Fe(2+) as cofactor.

It is found in the cytoplasm. The protein resides in the nucleus. Functionally, probable Fe(2+)/2-oxoglutarate-dependent dioxygenase involved in oxidative demethylation of nucleic acids. Binds nucleic acids with a preference for ssDNA or ssRNA to other types of DNAs. May play a role in nucleic acid damage repair. The protein is Probable RNA/DNA demethylase ALKBH6 (alkbh6) of Danio rerio (Zebrafish).